The sequence spans 285 residues: 2-dehydro-3-deoxyphosphooctonate aldolase (285 aa).

It belongs to the KdsA family.

Its subcellular location is the cytoplasm. It carries out the reaction D-arabinose 5-phosphate + phosphoenolpyruvate + H2O = 3-deoxy-alpha-D-manno-2-octulosonate-8-phosphate + phosphate. It participates in carbohydrate biosynthesis; 3-deoxy-D-manno-octulosonate biosynthesis; 3-deoxy-D-manno-octulosonate from D-ribulose 5-phosphate: step 2/3. It functions in the pathway bacterial outer membrane biogenesis; lipopolysaccharide biosynthesis. This is 2-dehydro-3-deoxyphosphooctonate aldolase from Paracidovorax citrulli (strain AAC00-1) (Acidovorax citrulli).